Consider the following 392-residue polypeptide: Succinate--CoA ligase [ADP-forming] subunit beta (392 aa).

The 236-residue stretch at 9 to 244 (KALLAQYGVG…LSEEESSEIE (236 aa)) folds into the ATP-grasp domain. ATP is bound by residues lysine 46, 53–55 (GRG), glutamate 99, leucine 102, and glutamate 107. Mg(2+) contacts are provided by asparagine 199 and aspartate 213. Residues asparagine 264 and 321–323 (GIV) contribute to the substrate site.

It belongs to the succinate/malate CoA ligase beta subunit family. In terms of assembly, heterotetramer of two alpha and two beta subunits. Requires Mg(2+) as cofactor.

The enzyme catalyses succinate + ATP + CoA = succinyl-CoA + ADP + phosphate. It catalyses the reaction GTP + succinate + CoA = succinyl-CoA + GDP + phosphate. Its pathway is carbohydrate metabolism; tricarboxylic acid cycle; succinate from succinyl-CoA (ligase route): step 1/1. Succinyl-CoA synthetase functions in the citric acid cycle (TCA), coupling the hydrolysis of succinyl-CoA to the synthesis of either ATP or GTP and thus represents the only step of substrate-level phosphorylation in the TCA. The beta subunit provides nucleotide specificity of the enzyme and binds the substrate succinate, while the binding sites for coenzyme A and phosphate are found in the alpha subunit. The polypeptide is Succinate--CoA ligase [ADP-forming] subunit beta (Wolinella succinogenes (strain ATCC 29543 / DSM 1740 / CCUG 13145 / JCM 31913 / LMG 7466 / NCTC 11488 / FDC 602W) (Vibrio succinogenes)).